The following is a 210-amino-acid chain: Kinetochore protein Spc25 (210 aa).

Residues 42 to 106 adopt a coiled-coil conformation; it reads TMENIKRQQH…KKKQERDKLI (65 aa).

This sequence belongs to the SPC25 family. Component of the Ndc80 complex, which is composed of Ndc80, Nuf2 and Spc25.

It is found in the nucleus. Its subcellular location is the chromosome. The protein localises to the centromere. It localises to the kinetochore. Acts as a component of the essential kinetochore-associated Ndc80 complex, which is required for chromosome segregation and spindle checkpoint activity during meiosis and mitosis. Required for kinetochore integrity and the organization of stable microtubule binding sites in the outer plate of the kinetochore. Participates in SAC signaling that responds specifically to disruptions in spindle microtubule dynamics. The NDC80 complex synergistically enhances the affinity of the SKA1 complex for microtubules and may allow the NDC80 complex to track depolymerizing microtubules. This chain is Kinetochore protein Spc25, found in Drosophila virilis (Fruit fly).